The sequence spans 2130 residues: Highly reducing polyketide synthase anuA (2130 aa).

The Ketosynthase family 3 (KS3) domain maps to Met1–Gln213. The Malonyl-CoA:ACP transacylase (MAT) domain occupies Phe317–Gly644. Residues His701 to Ala836 are N-terminal hotdog fold. Residues His701–Ala1000 form the PKS/mFAS DH domain. His733 acts as the Proton acceptor; for dehydratase activity in catalysis. Residues Leu849–Ala1000 form a C-terminal hotdog fold region. Catalysis depends on Asp914, which acts as the Proton donor; for dehydratase activity. Residues Gly1405–Ile1722 enclose the Enoyl reductase (ER) domain. The 181-residue stretch at Ser1747–Ser1927 folds into the Ketoreductase (KR) domain. In terms of domain architecture, Carrier spans Thr2047–Leu2125. Ser2084 is subject to O-(pantetheine 4'-phosphoryl)serine.

It depends on pantetheine 4'-phosphate as a cofactor.

Its pathway is secondary metabolite biosynthesis. Functionally, highly reducing polyketide synthase; part of the gene cluster that mediates the biosynthesis of annullatin D, an alkylated aromatic polyketide with a fused dihydrobenzofuran lactone ring system that exhibits potent agonistic activities toward the cannabinoid receptors. The annullatin backbone 2-hydroxymethyl-3-pentylphenol is assembled from one acetyl-CoA starter unit and 5 malonyl-CoA elongation units by cooperation of the highly reducing polyketide synthase anuA, the short-chain dehydrogenase anuB and the oxidoreductase anuC, before being hydroxylated at the C-5 alkyl chain by the cytochrome P450 monooxygenase anuE to form (8S)-annullatin E. The prenyltransferase anuH subsequently installs one isoprenyl group at the benzene ring to form (8S)-annullatin J. Enzymatic or nonenzymatic dihydro-benzofuran ring formation between the prenyl and the phenolic hydroxyl groups in (8S)-annullatin J results in two diastereomers (2S,9S)-annullatin H and compound 12. The intermediate (2S,9S)-annullatin H is then converted to (2S,9S)-annullatin D by the FAD-linked oxidoreductase anuG-catalyzed five-member lactone ring formation. The isomer 12 acts as a substrate for the short-chain dehydrogenase anuF and is oxidized to (2R)-annullatin F, which is subsequently acetylated by an acetyltransferase leading to (2R)-annullatin G formation. The remaining enzymes identified within the cluster, anuD, anuI and anuJ, seem not to be involved in annullatin biosynthesis. The sequence is that of Highly reducing polyketide synthase anuA from Penicillium roqueforti (strain FM164).